The chain runs to 82 residues: uncharacterized protein (82 aa).

Helical transmembrane passes span 29-49 (LMNA…GIII) and 55-75 (WSLP…LTFF).

It is found in the cell membrane. This is an uncharacterized protein from Escherichia coli (strain K12).